Reading from the N-terminus, the 142-residue chain is Hemoglobin subunit alpha (142 aa).

Ser-1 is modified (N-acetylserine). Residues 1 to 142 form the Globin domain; it reads SLSDKDKAAV…LSLALAEKYR (142 aa). Heme b is bound by residues His-59 and His-88.

The protein belongs to the globin family. In terms of assembly, heterotetramer of two alpha chains and two beta chains. As to expression, red blood cells.

Involved in oxygen transport from gills to the various peripheral tissues. The polypeptide is Hemoglobin subunit alpha (Lycodes reticulatus (Arctic eelpout)).